The sequence spans 216 residues: RNA pyrophosphohydrolase (216 aa).

Positions 6 to 149 (GFRPNVGIIL…KRDVYQLALT (144 aa)) constitute a Nudix hydrolase domain. A Nudix box motif is present at residues 38-59 (GGIKYGETPMQAMYRELHEETG). A disordered region spans residues 159-191 (AQRTDKSRGPRAPRYPRVANGHAASETPAAIDT).

It belongs to the Nudix hydrolase family. RppH subfamily. Requires a divalent metal cation as cofactor.

Functionally, accelerates the degradation of transcripts by removing pyrophosphate from the 5'-end of triphosphorylated RNA, leading to a more labile monophosphorylated state that can stimulate subsequent ribonuclease cleavage. In Burkholderia pseudomallei (strain 668), this protein is RNA pyrophosphohydrolase.